The primary structure comprises 197 residues: MNLTQLVLASHNGGKLKELQAMLGGSVTLRSVSEFSLVEPEETGLSFVENAILKARNASRLSGLPALADDSGLAVDFLGGAPGIYSARYADGQGDAANNAKLLEALKDVPDEQRGAQFVCVLALVRHADDPLPILCEGLWHGRILHAASGEYGFGYDPLFWVPERNCSSAELGPSEKNQLSHRARAMVLLRQRLGLQ.

10 to 15 (SHNGGK) lines the substrate pocket. Residues Glu-41 and Asp-70 each coordinate Mg(2+). Asp-70 functions as the Proton acceptor in the catalytic mechanism. Substrate-binding positions include Ser-71, 154–157 (FGYD), Lys-177, and 182–183 (HR).

It belongs to the HAM1 NTPase family. As to quaternary structure, homodimer. Mg(2+) is required as a cofactor.

It carries out the reaction XTP + H2O = XMP + diphosphate + H(+). It catalyses the reaction dITP + H2O = dIMP + diphosphate + H(+). The enzyme catalyses ITP + H2O = IMP + diphosphate + H(+). Pyrophosphatase that catalyzes the hydrolysis of nucleoside triphosphates to their monophosphate derivatives, with a high preference for the non-canonical purine nucleotides XTP (xanthosine triphosphate), dITP (deoxyinosine triphosphate) and ITP. Seems to function as a house-cleaning enzyme that removes non-canonical purine nucleotides from the nucleotide pool, thus preventing their incorporation into DNA/RNA and avoiding chromosomal lesions. This Pseudomonas syringae pv. tomato (strain ATCC BAA-871 / DC3000) protein is dITP/XTP pyrophosphatase.